A 349-amino-acid polypeptide reads, in one-letter code: METPPVNTIGEKDTSQPQQEWEKNLRENLDSVIQIRQQPRDPPTETLELEVSPDPASQILEHTQGAEKLVAELEGDSHKSHGSTSQMPEALQASDLWYCPDGSFVKKIVIRGHGLDKPKLGSCCRVLALGFPFGSGPPEGWTELTMGVGPWREETWGELIEKCLESMCQGEEAELQLPGHSGPPVRLTLASFTQGRDSWELETSEKEALAREERARGTELFRAGNPEGAARCYGRALRLLLTLPPPGPPERTVLHANLAACQLLLGQPQLAAQSCDRVLEREPGHLKALYRRGVAQAALGNLEKATADLKKVLAIDPKNRAAQEELGKVVIQGKNQDAGLAQGLRKMFG.

Threonine 3 is modified (phosphothreonine). Residues arginine 36–proline 55 form a disordered region. 3 TPR repeats span residues alanine 210–leucine 243, threonine 252–histidine 285, and leucine 286–asparagine 319.

As to quaternary structure, forms a ternary complex with CDKN1A/p21 and HSP90AB1/Hsp90. As to expression, ubiquitously expressed with higher levels in testis.

Functionally, may be involved in response to X-ray. Regulates p21 protein stability by binding to Hsp90 and p21. The protein is FK506-binding protein-like (FKBPL) of Homo sapiens (Human).